The following is a 260-amino-acid chain: Hemin import ATP-binding protein HmuV (260 aa).

The region spanning 3–239 (LHAQQISLSI…QRLSEVYGCD (237 aa)) is the ABC transporter domain. 35 to 42 (GPNGSGKS) is an ATP binding site.

This sequence belongs to the ABC transporter superfamily. Heme (hemin) importer (TC 3.A.1.14.5) family. The complex is composed of two ATP-binding proteins (HmuV), two transmembrane proteins (HmuU) and a solute-binding protein (HmuT).

The protein localises to the cell inner membrane. Part of the ABC transporter complex HmuTUV involved in hemin import. Responsible for energy coupling to the transport system. The chain is Hemin import ATP-binding protein HmuV from Ruegeria sp. (strain TM1040) (Silicibacter sp.).